Consider the following 202-residue polypeptide: Protein Nef (202 aa).

The N-myristoyl glycine; by host moiety is linked to residue Gly-2. Ser-6 carries the phosphoserine; by host modification. The acidic; interacts with host PACS1 and PACS2; stabilizes the interaction of NEF/MHC-I with host AP1M1; necessary for MHC-I internalization stretch occupies residues 62-65; sequence EEEE. Residues 69 to 78 form an SH3-binding; interaction with Src family tyrosine kinases region; sequence PVTPQVPLRP. Positions 72 to 75 match the PxxP; stabilizes the interaction of NEF/MHC-I with host AP1M1; necessary for MHC-I internalization motif; sequence PQVP. The tract at residues 108–124 is mediates dimerization, Nef-PTE1 interaction; sequence DILDLWIYHTQGYFPDW. The interval 148–180 is binding to ATP6V1H; the sequence is VEPDKVEEANKGENTRLLHPVSLHGMDDPEREV. A Dileucine internalization motif; necessary for CD4 internalization motif is present at residues 164–165; sequence LL. Positions 174–175 match the Diacidic; necessary for CD4 internalization motif; sequence DD.

Belongs to the lentivirus primate group Nef protein family. As to quaternary structure, monomer; cytosolic form. Homodimer; membrane bound form. Interacts with Nef associated p21-activated kinase (PAK2); this interaction activates PAK2. Associates with the Nef-MHC-I-AP1 complex; this complex is required for MHC-I internalization. Interacts (via C-terminus) with host PI3-kinase. Interacts with host PACS1; this interaction seems to be weak. Interacts with host PACS2. Interacts with host LCK and MAPK3; these interactions inhibit the kinase activity of the latter. Interacts with host ATP6V1H; this interaction may play a role in CD4 endocytosis. Associates with the CD4-Nef-AP2 complex; this complex is required for CD4 internalization. Interacts with host AP2 subunit alpha and AP2 subunit sigma2. Interacts with TCR-zeta chain; this interaction up-regulates the Fas ligand (FasL) surface expression. Interacts with host HCK, LYN, and SRC; these interactions activate the Src family kinases. Interacts with MAP3K5; this interaction inhibits the Fas and TNFR-mediated death signals. Interacts with beta-COP and PTE1. Interacts with human RACK1; this increases Nef phosphorylation by PKC. Interacts with TP53; this interaction decreases the half-life of TP53, protecting the infected cell against p53-mediated apoptosis. Post-translationally, the virion-associated Nef proteins are cleaved by the viral protease to release the soluble C-terminal core protein. Nef is probably cleaved concomitantly with viral structural proteins on maturation of virus particles. Myristoylated. In terms of processing, phosphorylated on serine residues, probably by host PKCdelta and theta.

It is found in the host cell membrane. The protein resides in the virion. The protein localises to the secreted. It localises to the host Golgi apparatus membrane. Factor of infectivity and pathogenicity, required for optimal virus replication. Alters numerous pathways of T-lymphocyte function and down-regulates immunity surface molecules in order to evade host defense and increase viral infectivity. Alters the functionality of other immunity cells, like dendritic cells, monocytes/macrophages and NK cells. In terms of biological role, in infected CD4(+) T-lymphocytes, down-regulates the surface MHC-I, mature MHC-II, CD4, CD28, CCR5 and CXCR4 molecules. Mediates internalization and degradation of host CD4 through the interaction of with the cytoplasmic tail of CD4, the recruitment of AP-2 (clathrin adapter protein complex 2), internalization through clathrin coated pits, and subsequent transport to endosomes and lysosomes for degradation. Diverts host MHC-I molecules to the trans-Golgi network-associated endosomal compartments by an endocytic pathway to finally target them for degradation. MHC-I down-regulation may involve AP-1 (clathrin adapter protein complex 1) or possibly Src family kinase-ZAP70/Syk-PI3K cascade recruited by PACS2. In consequence infected cells are masked for immune recognition by cytotoxic T-lymphocytes. Decreasing the number of immune receptors also prevents reinfection by more HIV particles (superinfection). Down-regulates host SERINC3 and SERINC5 thereby excluding these proteins from the viral particles. Virion infectivity is drastically higher when SERINC3 or SERINC5 are excluded from the viral envelope, because these host antiviral proteins impair the membrane fusion event necessary for subsequent virion penetration. Its function is as follows. Bypasses host T-cell signaling by inducing a transcriptional program nearly identical to that of anti-CD3 cell activation. Interaction with TCR-zeta chain up-regulates the Fas ligand (FasL). Increasing surface FasL molecules and decreasing surface MHC-I molecules on infected CD4(+) cells send attacking cytotoxic CD8+ T-lymphocytes into apoptosis. Functionally, plays a role in optimizing the host cell environment for viral replication without causing cell death by apoptosis. Protects the infected cells from apoptosis in order to keep them alive until the next virus generation is ready to strike. Inhibits the Fas and TNFR-mediated death signals by blocking MAP3K5/ASK1. Decreases the half-life of TP53, protecting the infected cell against p53-mediated apoptosis. Inhibits the apoptotic signals regulated by the Bcl-2 family proteins through the formation of a Nef/PI3-kinase/PAK2 complex that leads to activation of PAK2 and induces phosphorylation of host BAD. Extracellular Nef protein targets CD4(+) T-lymphocytes for apoptosis by interacting with CXCR4 surface receptors. This chain is Protein Nef, found in Human immunodeficiency virus type 1 group M subtype B (isolate Lai) (HIV-1).